Consider the following 416-residue polypeptide: tRNA(Met) cytidine acetate ligase (416 aa).

ATP-binding positions include 7–20, Gly-102, Asn-166, and Arg-191; that span reads VAEY…HLYL.

This sequence belongs to the TmcAL family.

Its subcellular location is the cytoplasm. It carries out the reaction cytidine(34) in elongator tRNA(Met) + acetate + ATP = N(4)-acetylcytidine(34) in elongator tRNA(Met) + AMP + diphosphate. Its function is as follows. Catalyzes the formation of N(4)-acetylcytidine (ac(4)C) at the wobble position of elongator tRNA(Met), using acetate and ATP as substrates. First activates an acetate ion to form acetyladenylate (Ac-AMP) and then transfers the acetyl group to tRNA to form ac(4)C34. This chain is tRNA(Met) cytidine acetate ligase, found in Syntrophomonas wolfei subsp. wolfei (strain DSM 2245B / Goettingen).